A 511-amino-acid chain; its full sequence is Immunoglobulin-binding protein EibD (511 aa).

Positions 1–26 are cleaved as a signal peptide; the sequence is MSKKFTMTLLSSSLAGLLVMSGGVSA. Residues 27–417 are surface exposed passenger domain; the sequence is QNGTYSVLQD…SKAIAANTRT (391 aa). The Extracellular portion of the chain corresponds to 27–460; the sequence is QNGTYSVLQD…GLFQPYSVGK (434 aa). The interval 161 to 287 is head domain; sequence DAKASGEFSV…TGTESDKTYG (127 aa). Residues 288–303 are neck; that stretch reads TRVLGGLSDGTRNSDA. Residues 304 to 349 are right-handed coiled-coil (RHcc); it reads ATVGQLNRKVGGVYDDVKARITVESEKQKKYTDQKTSEVNEKVEAR. The stretch at 304-349 forms a coiled coil; the sequence is ATVGQLNRKVGGVYDDVKARITVESEKQKKYTDQKTSEVNEKVEAR. The interval 329-344 is required to bind IgA; that stretch reads EKQKKYTDQKTSEVNE. Positions 350–375 are saddle domain; that stretch reads TTVGVDSDGKLTRAEGATKTIAVNDG. A coiled-coil region spans residues 376–441; the sequence is LVALSGRTDR…INENHKEMKR (66 aa). The tract at residues 376-441 is left-handed coiled-coil (LHcc); that stretch reads LVALSGRTDR…INENHKEMKR (66 aa). The segment at 384-418 is required to bind IgG; sequence DRIDYAVGAIDGRVTRNTQSIEKNSKAIAANTRTL. Residues 418-460 form an outer membrane translocation of the passenger domain region; the sequence is LQQHSARLDSQQRQINENHKEMKRAAAQSAALTGLFQPYSVGK. Beta stranded transmembrane passes span 461–471, 474–485, 488–497, and 501–511; these read FNATAAVGGYS, QALAVGVGYRFN, TAAKAGVAFS, and ASWNVGVNFEF. The tract at residues 461-511 is translocator domain; the sequence is FNATAAVGGYSDQQALAVGVGYRFNEQTAAKAGVAFSDGDASWNVGVNFEF.

It belongs to the autotransporter-2 (AT-2) (TC 1.B.40) family. Eib subfamily. Homotrimer; can probably form mixed heterotrimers in vivo. Will form mixed heterotrimers with EibA or EibC; these are correctly located in the outer membrane and bind IgG Fc, although less well than homotrimers. In denaturing gels runs as a band of about 210 kDa. Binds the Fc portion of immunoglobulins; binds more than 1 Fc per subunit, can be modeled to bind 3 Fc per trimer.

It is found in the cell surface. The protein resides in the cell outer membrane. Binds (in a non-immune fashion) to the Fc portion of human IgA and IgG; binding occurs on the cell surface. Confers the ability to survive exposure to human serum exposure. Binds to the Fc portion of human IgG, IgA and to whole mouse antibodies also via Fc. Upon overexpression cells acquire an extra cell surface layer that forms a zipper-like contact between cells; cells autoagglutinate and form biofilm more readily, suggesting it may play a role in defense against a host. The polypeptide is Immunoglobulin-binding protein EibD (Escherichia coli).